Here is a 189-residue protein sequence, read N- to C-terminus: Peptidyl-tRNA hydrolase (189 aa).

Y15 serves as a coordination point for tRNA. Residue H20 is the Proton acceptor of the active site. The tRNA site is built by F66, N68, and N114.

This sequence belongs to the PTH family. Monomer.

Its subcellular location is the cytoplasm. The enzyme catalyses an N-acyl-L-alpha-aminoacyl-tRNA + H2O = an N-acyl-L-amino acid + a tRNA + H(+). Functionally, hydrolyzes ribosome-free peptidyl-tRNAs (with 1 or more amino acids incorporated), which drop off the ribosome during protein synthesis, or as a result of ribosome stalling. Catalyzes the release of premature peptidyl moieties from peptidyl-tRNA molecules trapped in stalled 50S ribosomal subunits, and thus maintains levels of free tRNAs and 50S ribosomes. The polypeptide is Peptidyl-tRNA hydrolase (Streptococcus pyogenes serotype M3 (strain ATCC BAA-595 / MGAS315)).